Consider the following 166-residue polypeptide: Large ribosomal subunit protein uL10 (166 aa).

This sequence belongs to the universal ribosomal protein uL10 family. As to quaternary structure, part of the ribosomal stalk of the 50S ribosomal subunit. The N-terminus interacts with L11 and the large rRNA to form the base of the stalk. The C-terminus forms an elongated spine to which L12 dimers bind in a sequential fashion forming a multimeric L10(L12)X complex.

Its function is as follows. Forms part of the ribosomal stalk, playing a central role in the interaction of the ribosome with GTP-bound translation factors. This is Large ribosomal subunit protein uL10 from Aeromonas hydrophila subsp. hydrophila (strain ATCC 7966 / DSM 30187 / BCRC 13018 / CCUG 14551 / JCM 1027 / KCTC 2358 / NCIMB 9240 / NCTC 8049).